A 170-amino-acid polypeptide reads, in one-letter code: Acireductone dioxygenase (170 aa).

His-99, His-101, Glu-105, and His-144 together coordinate Fe(2+). Residues His-99, His-101, Glu-105, and His-144 each contribute to the Ni(2+) site.

The protein belongs to the acireductone dioxygenase (ARD) family. Monomer. Fe(2+) serves as cofactor. Ni(2+) is required as a cofactor.

It catalyses the reaction 1,2-dihydroxy-5-(methylsulfanyl)pent-1-en-3-one + O2 = 3-(methylsulfanyl)propanoate + CO + formate + 2 H(+). It carries out the reaction 1,2-dihydroxy-5-(methylsulfanyl)pent-1-en-3-one + O2 = 4-methylsulfanyl-2-oxobutanoate + formate + 2 H(+). It functions in the pathway amino-acid biosynthesis; L-methionine biosynthesis via salvage pathway; L-methionine from S-methyl-5-thio-alpha-D-ribose 1-phosphate: step 5/6. In terms of biological role, catalyzes 2 different reactions between oxygen and the acireductone 1,2-dihydroxy-3-keto-5-methylthiopentene (DHK-MTPene) depending upon the metal bound in the active site. Fe-containing acireductone dioxygenase (Fe-ARD) produces formate and 2-keto-4-methylthiobutyrate (KMTB), the alpha-ketoacid precursor of methionine in the methionine recycle pathway. Ni-containing acireductone dioxygenase (Ni-ARD) produces methylthiopropionate, carbon monoxide and formate, and does not lie on the methionine recycle pathway. The polypeptide is Acireductone dioxygenase (Bacillus thuringiensis subsp. konkukian (strain 97-27)).